The sequence spans 185 residues: Adenine phosphoribosyltransferase (185 aa).

It belongs to the purine/pyrimidine phosphoribosyltransferase family. As to quaternary structure, homodimer.

It localises to the cytoplasm. It carries out the reaction AMP + diphosphate = 5-phospho-alpha-D-ribose 1-diphosphate + adenine. It participates in purine metabolism; AMP biosynthesis via salvage pathway; AMP from adenine: step 1/1. Its function is as follows. Catalyzes a salvage reaction resulting in the formation of AMP, that is energically less costly than de novo synthesis. The polypeptide is Adenine phosphoribosyltransferase (Corynebacterium glutamicum (strain ATCC 13032 / DSM 20300 / JCM 1318 / BCRC 11384 / CCUG 27702 / LMG 3730 / NBRC 12168 / NCIMB 10025 / NRRL B-2784 / 534)).